Consider the following 154-residue polypeptide: Large ribosomal subunit protein uL13 (154 aa).

Residues Pro132 to Ala154 form a disordered region.

It belongs to the universal ribosomal protein uL13 family. In terms of assembly, part of the 50S ribosomal subunit.

Its function is as follows. This protein is one of the early assembly proteins of the 50S ribosomal subunit, although it is not seen to bind rRNA by itself. It is important during the early stages of 50S assembly. The sequence is that of Large ribosomal subunit protein uL13 from Paracoccus denitrificans (strain Pd 1222).